The primary structure comprises 519 residues: Glucose-1-phosphate adenylyltransferase large subunit 2, chloroplastic/amyloplastic (519 aa).

The protein belongs to the bacterial/plant glucose-1-phosphate adenylyltransferase family. As to quaternary structure, heterotetramer. In terms of tissue distribution, leaves and tubers.

It is found in the plastid. It localises to the chloroplast. Its subcellular location is the amyloplast. The enzyme catalyses alpha-D-glucose 1-phosphate + ATP + H(+) = ADP-alpha-D-glucose + diphosphate. The protein operates within glycan biosynthesis; starch biosynthesis. Activated by 3'phosphoglycerate, inhibited by orthophosphate. Allosteric regulation. This protein plays a role in synthesis of starch. It catalyzes the synthesis of the activated glycosyl donor, ADP-glucose from Glc-1-P and ATP. The protein is Glucose-1-phosphate adenylyltransferase large subunit 2, chloroplastic/amyloplastic (AGPS2) of Solanum tuberosum (Potato).